The primary structure comprises 52 residues: UPF0181 protein HI_1434.2 (52 aa).

This sequence belongs to the UPF0181 family.

This is UPF0181 protein HI_1434.2 from Haemophilus influenzae (strain ATCC 51907 / DSM 11121 / KW20 / Rd).